Here is a 234-residue protein sequence, read N- to C-terminus: RNA-binding protein pno1 (234 aa).

The tract at residues 1–39 (MPTQDSAAKQADDGFQLVQKKSRKRKMTMDMDDADPKAG) is disordered. The region spanning 158 to 207 (LARCIGRLAGKGGRTKFTIENVTKTRIVLADSKVHILGSYQNIRAARTAL) is the KH domain.

The protein belongs to the PNO1 family.

Its subcellular location is the nucleus. It is found in the nucleolus. This chain is RNA-binding protein pno1, found in Ixodes scapularis (Black-legged tick).